Here is a 1191-residue protein sequence, read N- to C-terminus: Homeodomain-interacting protein kinase 3 (1191 aa).

K27 participates in a covalent cross-link: Glycyl lysine isopeptide (Lys-Gly) (interchain with G-Cter in SUMO2). In terms of domain architecture, Protein kinase spans 197–525; the sequence is YEVLDFLGRG…PIETLNHPFV (329 aa). Residues 203-211 and K226 contribute to the ATP site; that span reads LGRGTFGQV. D322 functions as the Proton acceptor in the catalytic mechanism. The residue at position 359 (Y359) is a Phosphotyrosine. Residues 766–920 form an interaction with AR region; sequence QNRSNSLQNT…NSMSDDEQES (155 aa). Positions 774–867 are interaction with FAS; that stretch reads NTNVPHSAFI…SPRPSLRECK (94 aa). The interval 801-828 is disordered; sequence TQDNHTSEGEARTCHEASVRQDSSVSDK. Positions 802 to 828 are enriched in basic and acidic residues; that stretch reads QDNHTSEGEARTCHEASVRQDSSVSDK. The segment at 846–856 is interaction with UBL1; it reads ITISSDTDDEE. The span at 888 to 905 shows a compositional bias: low complexity; it reads SSPDSTLSTSSSGQSSPS. Disordered regions lie at residues 888 to 960 and 993 to 1022; these read SSPD…TCAG and TCQPLTKGQPAPGKLNQPSASAARQQKPTS. A compositionally biased stretch (polar residues) spans 1008-1022; that stretch reads NQPSASAARQQKPTS.

The protein belongs to the protein kinase superfamily. CMGC Ser/Thr protein kinase family. HIPK subfamily. Interacts with Nkx1-2. Interacts with FAS and DAXX. Probably part of a complex consisting of HIPK3, FAS and FADD. Interacts with UBL1/SUMO-1. Interacts with and stabilizes ligand-bound androgen receptor (AR). In terms of processing, autophosphorylated. Autophosphorylation is not required for catalytic activity. Post-translationally, may be sumoylated.

The protein resides in the nucleus. The enzyme catalyses L-seryl-[protein] + ATP = O-phospho-L-seryl-[protein] + ADP + H(+). The catalysed reaction is L-threonyl-[protein] + ATP = O-phospho-L-threonyl-[protein] + ADP + H(+). In terms of biological role, seems to negatively regulate apoptosis by promoting FADD phosphorylation. Enhances androgen receptor-mediated transcription. May act as a transcriptional corepressor for NK homeodomain transcription factors. The polypeptide is Homeodomain-interacting protein kinase 3 (Hipk3) (Rattus norvegicus (Rat)).